An 881-amino-acid polypeptide reads, in one-letter code: Armadillo repeat-containing protein 3 (881 aa).

ARM repeat units follow at residues 15–54, 57–96, 98–138, 140–179, 181–220, 222–262, 264–304, 306–345, 346–385, 388–427, 429–468, and 470–509; these read DVFD…KFAL, EENK…ILAS, SDVK…NMSV, YTGK…NLVQ, FQCR…VITC, KEAR…NCLE, MDTM…KAAY, PENR…ALCE, NLSC…NLTT, PANA…NMAT, EPLR…ATAC, and VEAR…VCAG. 2 S-palmitoyl cysteine lipidation sites follow: Cys-507 and Cys-518. The disordered stretch occupies residues 605–659; that stretch reads NNKSDTSPPPSMEDKSSDVGYGRSISSSSSLRRGSKEKANAIFGSPTEEKSEPAS. Positions 622-636 are enriched in low complexity; it reads DVGYGRSISSSSSLR.

Homodimer. Interacts with PIK3C3, PIK3R4 and BECN1. Interacts (via ARM domains) with ATG14. Post-translationally, palmitoylation is important for its function in autophagy. As to expression, testis-specific.

Its function is as follows. Essential for male fertility and sperm motility. During spermatogenesis, promotes the autophagic degradation of excessive ribosomes, providing energy resources for mitochondria and thus ensuring sperm flagellar motility. The chain is Armadillo repeat-containing protein 3 (Armc3) from Mus musculus (Mouse).